Consider the following 130-residue polypeptide: UPF0251 protein Mevan_1492 (130 aa).

The protein belongs to the UPF0251 family.

This is UPF0251 protein Mevan_1492 from Methanococcus vannielii (strain ATCC 35089 / DSM 1224 / JCM 13029 / OCM 148 / SB).